The sequence spans 473 residues: Phenolic acid decarboxylase (473 aa).

Mn(2+)-binding residues include Asn160, His182, and Glu224. Residues 160 to 165 (NVGIYR) and 181 to 182 (QH) each bind prenylated FMN. Catalysis depends on Glu273, which acts as the Proton donor.

It belongs to the UbiD family. YclC subfamily. The cofactor is prenylated FMN. It depends on Mn(2+) as a cofactor.

The catalysed reaction is 4-hydroxybenzoate + H(+) = phenol + CO2. The enzyme catalyses vanillate + H(+) = guaiacol + CO2. In terms of biological role, involved in the non-oxidative decarboxylation and detoxification of phenolic derivatives under both aerobic and anaerobic conditions. Phenolic acid decarboxylase that catalyzes the reversible decarboxylation of 4-hydroxybenzoate and vanillate. Could also catalyze the decarboxylation of salicylate. Is not active on di- and tri-hydroxybenzoate derivatives. The protein is Phenolic acid decarboxylase of Bacillus subtilis (strain 168).